Reading from the N-terminus, the 296-residue chain is Protoheme IX farnesyltransferase (296 aa).

Transmembrane regions (helical) follow at residues 11 to 31 (PGII…AAQG), 35 to 55 (YPLF…GCVF), 84 to 104 (VTLV…YVAA), 107 to 127 (LAMW…SLYM), 132 to 152 (VYGT…GYCA), 162 to 182 (LILL…IAIF), 208 to 228 (ITLY…GGYA), 229 to 249 (GYKY…MALS), and 264 to 284 (LFVF…VDSM).

This sequence belongs to the UbiA prenyltransferase family. Protoheme IX farnesyltransferase subfamily.

The protein resides in the cell inner membrane. The enzyme catalyses heme b + (2E,6E)-farnesyl diphosphate + H2O = Fe(II)-heme o + diphosphate. Its pathway is porphyrin-containing compound metabolism; heme O biosynthesis; heme O from protoheme: step 1/1. In terms of biological role, converts heme B (protoheme IX) to heme O by substitution of the vinyl group on carbon 2 of heme B porphyrin ring with a hydroxyethyl farnesyl side group. The chain is Protoheme IX farnesyltransferase from Pectobacterium atrosepticum (strain SCRI 1043 / ATCC BAA-672) (Erwinia carotovora subsp. atroseptica).